Consider the following 130-residue polypeptide: Small ribosomal subunit protein uS9 (130 aa).

Belongs to the universal ribosomal protein uS9 family.

The protein is Small ribosomal subunit protein uS9 of Haemophilus influenzae (strain 86-028NP).